Consider the following 228-residue polypeptide: Small ribosomal subunit protein uS3 (228 aa).

Residues 39–107 form the KH type-2 domain; that stretch reads VREYLQDKLK…PVHINIEEIR (69 aa).

This sequence belongs to the universal ribosomal protein uS3 family. Part of the 30S ribosomal subunit. Forms a tight complex with proteins S10 and S14.

Functionally, binds the lower part of the 30S subunit head. Binds mRNA in the 70S ribosome, positioning it for translation. The chain is Small ribosomal subunit protein uS3 from Pseudomonas fluorescens (strain ATCC BAA-477 / NRRL B-23932 / Pf-5).